Consider the following 249-residue polypeptide: Type III pantothenate kinase (249 aa).

Residue 6-13 (DCGNSLIK) participates in ATP binding. Substrate-binding positions include Tyr93 and 100–103 (GLDR). The active-site Proton acceptor is the Asp102. Asp122 is a K(+) binding site. Thr125 contributes to the ATP binding site. Thr181 lines the substrate pocket.

The protein belongs to the type III pantothenate kinase family. In terms of assembly, homodimer. It depends on NH4(+) as a cofactor. K(+) serves as cofactor.

It localises to the cytoplasm. The enzyme catalyses (R)-pantothenate + ATP = (R)-4'-phosphopantothenate + ADP + H(+). It functions in the pathway cofactor biosynthesis; coenzyme A biosynthesis; CoA from (R)-pantothenate: step 1/5. Functionally, catalyzes the phosphorylation of pantothenate (Pan), the first step in CoA biosynthesis. In Pseudomonas paraeruginosa (strain DSM 24068 / PA7) (Pseudomonas aeruginosa (strain PA7)), this protein is Type III pantothenate kinase.